Reading from the N-terminus, the 377-residue chain is Protein-glutamate methylesterase/protein-glutamine glutaminase 1 (377 aa).

The Response regulatory domain maps to 4–121 (KVLVVDDSSF…ARNRDEAVTL (118 aa)). Asp-55 carries the post-translational modification 4-aspartylphosphate. A disordered region spans residues 138–170 (RPAAPRPAPTTSIAASSSLSQERAAATSPLGNR). Residues 146-157 (PTTSIAASSSLS) show a composition bias toward low complexity. A CheB-type methylesterase domain is found at 184–377 (SGKKYQLTAI…ERMLVEVGLA (194 aa)). Active-site residues include Ser-196, His-223, and Asp-319.

It belongs to the CheB family. In terms of processing, phosphorylated by CheA. Phosphorylation of the N-terminal regulatory domain activates the methylesterase activity.

Its subcellular location is the cytoplasm. The catalysed reaction is [protein]-L-glutamate 5-O-methyl ester + H2O = L-glutamyl-[protein] + methanol + H(+). It catalyses the reaction L-glutaminyl-[protein] + H2O = L-glutamyl-[protein] + NH4(+). In terms of biological role, involved in chemotaxis. Part of a chemotaxis signal transduction system that modulates chemotaxis in response to various stimuli. Catalyzes the demethylation of specific methylglutamate residues introduced into the chemoreceptors (methyl-accepting chemotaxis proteins or MCP) by CheR. Also mediates the irreversible deamidation of specific glutamine residues to glutamic acid. The sequence is that of Protein-glutamate methylesterase/protein-glutamine glutaminase 1 from Vibrio cholerae serotype O1 (strain ATCC 39315 / El Tor Inaba N16961).